Consider the following 567-residue polypeptide: Urease subunit alpha 1 (567 aa).

In terms of domain architecture, Urease spans 128–567; sequence GAVDTHVHYI…LPLAQLYHLF (440 aa). Residues H133, H135, and K216 each contribute to the Ni(2+) site. The residue at position 216 (K216) is an N6-carboxylysine. A substrate-binding site is contributed by H218. 2 residues coordinate Ni(2+): H245 and H271. Catalysis depends on H319, which acts as the Proton donor. D359 is a binding site for Ni(2+).

Belongs to the metallo-dependent hydrolases superfamily. Urease alpha subunit family. In terms of assembly, heterotrimer of UreA (gamma), UreB (beta) and UreC (alpha) subunits. Three heterotrimers associate to form the active enzyme. The cofactor is Ni cation. In terms of processing, carboxylation allows a single lysine to coordinate two nickel ions.

The protein localises to the cytoplasm. The catalysed reaction is urea + 2 H2O + H(+) = hydrogencarbonate + 2 NH4(+). Its pathway is nitrogen metabolism; urea degradation; CO(2) and NH(3) from urea (urease route): step 1/1. The chain is Urease subunit alpha 1 from Psychrobacter cryohalolentis (strain ATCC BAA-1226 / DSM 17306 / VKM B-2378 / K5).